Reading from the N-terminus, the 430-residue chain is Immunoglobulin heavy constant delta (430 aa).

Over 1-406 (APTKAPDVFP…FDDVGSLWTT (406 aa)) the chain is Extracellular. One can recognise an Ig-like 1 domain in the interval 6 to 98 (PDVFPIISGC…TASKSKKEIF (93 aa)). A disulfide bridge connects residues Cys28 and Cys84. Positions 96 to 167 (EIFRWPESPK…TPECPSHTQP (72 aa)) are disordered. Polar residues predominate over residues 106-118 (AQASSVPTAQPQA). O-linked (GalNAc...) serine glycans are attached at residues Ser109 and Ser110. Thr113, Thr126, Thr127, Thr131, and Thr132 each carry an O-linked (GalNAc...) threonine glycan. A compositionally biased stretch (basic and acidic residues) spans 138–158 (GGEEKKKEKEKEEQEERETKT). Ig-like domains lie at 175–263 (PAVQ…RLMA) and 267–373 (PAAQ…RSLE). Disulfide bonds link Cys190/Cys249 and Cys294/Cys355. 3 N-linked (GlcNAc...) asparagine glycosylation sites follow: Asn225, Asn316, and Asn367. Residues 407–427 (LSTFVALFILTLLYSGIVTFI) traverse the membrane as a helical segment. Residues 428 to 430 (KVK) lie on the Cytoplasmic side of the membrane.

As to quaternary structure, immunoglobulins are composed of two identical heavy chains and two identical light chains; disulfide-linked. An IgD molecule contains thus a delta heavy chain combined with either a kappa or a lambda light chains. Kappa light chains are found predominantly on the membrane IgD (mIgD) form and lambda on the secreted IgD (sIgD) form, this fact is poorly understood. Membrane-bound IgD molecules are non-covalently associated with a heterodimer of CD79A and CD79B.

It localises to the secreted. It is found in the cell membrane. Constant region of immunoglobulin heavy chains. Immunoglobulins, also known as antibodies, are membrane-bound or secreted glycoproteins produced by B lymphocytes. In the recognition phase of humoral immunity, the membrane-bound immunoglobulins serve as receptors which, upon binding of a specific antigen, trigger the clonal expansion and differentiation of B lymphocytes into immunoglobulins-secreting plasma cells. Secreted immunoglobulins mediate the effector phase of humoral immunity, which results in the elimination of bound antigens. The antigen binding site is formed by the variable domain of one heavy chain, together with that of its associated light chain. Thus, each immunoglobulin has two antigen binding sites with remarkable affinity for a particular antigen. The variable domains are assembled by a process called V-(D)-J rearrangement and can then be subjected to somatic hypermutations which, after exposure to antigen and selection, allow affinity maturation for a particular antigen. IgD is the major antigen receptor isotype on the surface of most peripheral B-cells, where it is coexpressed with IgM. The membrane-bound IgD (mIgD) induces the phosphorylation of CD79A and CD79B by the Src family of protein tyrosine kinases. Soluble IgD (sIgD) concentration in serum below those of IgG, IgA, and IgM but much higher than that of IgE. IgM and IgD molecules present on B cells have identical V regions and antigen-binding sites. After the antigen binds to the B-cell receptor, the secreted form sIgD is shut off. IgD is a potent inducer of TNF, IL1B, and IL1RN. IgD also induces release of IL6, IL10, and LIF from peripheral blood mononuclear cells. Monocytes seem to be the main producers of cytokines in vitro in the presence of IgD. The chain is Immunoglobulin heavy constant delta from Homo sapiens (Human).